Reading from the N-terminus, the 355-residue chain is MASSTTPVSFLAPPLEQLRHLAEELRSLLPRVRVGEAQETAEEFNREMFWRRLNEAAMKVSGEATVLTTLFSKIPSPSPQETQRICEQVHIATEEVIAAYYTFPKDQGITLRKLVRNAVLDIVDGTAQLLDALLAAPSQSPENGDLISCNSVSVACQQVAEIPKDNKAAALLMLTKSVDLVKDAHEEMEQAVEECDPYCGLLDDSEDNSDSHHNEDGVGLPSNRDSYWSEEDQALITPCLALVRASRASLKKIRILVAENGRKDQVAQLDDIVDISDEISPSVDDLVLSVYPPVCHLTVRITSAKLVSVLIKALEITKASHVSPQPGDSWIPLLINAVDHCMDRIKELTQRAVEL.

N-acetylalanine is present on Ala2. Interaction with TCF3 regions lie at residues 2–181 (ASST…VDLV) and 147–355 (ISCN…AVEL). The interval 2 to 187 (ASSTTPVSFL…VDLVKDAHEE (186 aa)) is interaction with RPLP0. Residues 2 to 205 (ASSTTPVSFL…DPYCGLLDDS (204 aa)) are required for interaction with CCND1. The segment at 203–224 (DDSEDNSDSHHNEDGVGLPSNR) is disordered. The interaction with RPLP0 stretch occupies residues 235–355 (LITPCLALVR…KELTQRAVEL (121 aa)).

The protein belongs to the CCNDBP1 family. As to quaternary structure, interacts with CCND1 and GRAP2. May also interact with COPS5, RPLP0, SIRT6, SYF2 and TCF3. Post-translationally, phosphorylated.

Its subcellular location is the cytoplasm. The protein localises to the nucleus. Functionally, may negatively regulate cell cycle progression. May act at least in part via inhibition of the cyclin-D1/CDK4 complex, thereby preventing phosphorylation of RB1 and blocking E2F-dependent transcription. The polypeptide is Cyclin-D1-binding protein 1 (Ccndbp1) (Rattus norvegicus (Rat)).